The chain runs to 226 residues: Enolase-phosphatase E1 (226 aa).

Belongs to the HAD-like hydrolase superfamily. MasA/MtnC family. As to quaternary structure, monomer. The cofactor is Mg(2+).

The enzyme catalyses 5-methylsulfanyl-2,3-dioxopentyl phosphate + H2O = 1,2-dihydroxy-5-(methylsulfanyl)pent-1-en-3-one + phosphate. The protein operates within amino-acid biosynthesis; L-methionine biosynthesis via salvage pathway; L-methionine from S-methyl-5-thio-alpha-D-ribose 1-phosphate: step 3/6. Its pathway is amino-acid biosynthesis; L-methionine biosynthesis via salvage pathway; L-methionine from S-methyl-5-thio-alpha-D-ribose 1-phosphate: step 4/6. Its function is as follows. Bifunctional enzyme that catalyzes the enolization of 2,3-diketo-5-methylthiopentyl-1-phosphate (DK-MTP-1-P) into the intermediate 2-hydroxy-3-keto-5-methylthiopentenyl-1-phosphate (HK-MTPenyl-1-P), which is then dephosphorylated to form the acireductone 1,2-dihydroxy-3-keto-5-methylthiopentene (DHK-MTPene). This Shewanella sp. (strain W3-18-1) protein is Enolase-phosphatase E1.